An 88-amino-acid polypeptide reads, in one-letter code: Outer membrane protein H.8 (88 aa).

The first 17 residues, 1–17 (MKKSLFAAALLSLALAA), serve as a signal peptide directing secretion. The N-palmitoyl cysteine moiety is linked to residue Cys18. A lipid anchor (S-diacylglycerol cysteine) is attached at Cys18. 13 repeat units span residues 23 to 27 (AAEAP), 28 to 32 (AAEAS), 33 to 37 (STEAP), 38 to 42 (AAEAP), 43 to 47 (AAEAP), 48 to 52 (AAEAA), 53 to 57 (AAEAP), 58 to 62 (AAEAP), 63 to 67 (AAEAP), 68 to 72 (AAEAA), 73 to 77 (ATEAP), 78 to 82 (AAEAP), and 83 to 87 (AAEAA). Residues 23–87 (AAEAPAAEAS…AAEAPAAEAA (65 aa)) form a 13 X 5 AA tandem repeats of [AS]-[AT]-E-A-[PAS] region. The interval 23 to 88 (AAEAPAAEAS…AEAPAAEAAK (66 aa)) is disordered. The segment covering 25 to 88 (EAPAAEASST…AEAPAAEAAK (64 aa)) has biased composition (low complexity).

Its subcellular location is the cell outer membrane. This chain is Outer membrane protein H.8, found in Neisseria gonorrhoeae (strain ATCC 700825 / FA 1090).